The following is a 293-amino-acid chain: tRNA-cytidine(32) 2-sulfurtransferase (293 aa).

The PP-loop motif motif lies at 62–67 (SGGKDS). [4Fe-4S] cluster contacts are provided by C137, C140, and C228.

The protein belongs to the TtcA family. Homodimer. Requires Mg(2+) as cofactor. [4Fe-4S] cluster is required as a cofactor.

The protein localises to the cytoplasm. The catalysed reaction is cytidine(32) in tRNA + S-sulfanyl-L-cysteinyl-[cysteine desulfurase] + AH2 + ATP = 2-thiocytidine(32) in tRNA + L-cysteinyl-[cysteine desulfurase] + A + AMP + diphosphate + H(+). Its pathway is tRNA modification. Its function is as follows. Catalyzes the ATP-dependent 2-thiolation of cytidine in position 32 of tRNA, to form 2-thiocytidine (s(2)C32). The sulfur atoms are provided by the cysteine/cysteine desulfurase (IscS) system. In Brucella melitensis biotype 1 (strain ATCC 23456 / CCUG 17765 / NCTC 10094 / 16M), this protein is tRNA-cytidine(32) 2-sulfurtransferase.